A 241-amino-acid polypeptide reads, in one-letter code: RxLR effector protein SFI5 (241 aa).

Residues 1–20 (MLRQARPLVVLIAVTFLVAS) form the signal peptide. The short motif at 44–62 (RLLRTHHATIKVNADSEER) is the RxLR-dEER element.

Belongs to the RxLR effector family.

It is found in the secreted. The protein localises to the host cell membrane. Its function is as follows. Effector that suppresses flg22-induced post-translational MAP kinase activation in tomato but not in Arabidopsis. The perception of highly conserved pathogen- or microbe-associated molecular patterns (PAMPs/MAMPs), such as flg22, triggers converging signaling pathways recruiting MAP kinase cascades and inducing transcriptional re-programming, yielding a generic antimicrobial response. The chain is RxLR effector protein SFI5 from Phytophthora infestans (strain T30-4) (Potato late blight agent).